A 1330-amino-acid polypeptide reads, in one-letter code: ESX-3 secretion system protein EccC3 (1330 aa).

The next 2 membrane-spanning stretches (helical) occupy residues 43–63 (LPYLIGILIVGMIVALVATGM) and 65–85 (VISPQTLFFPFVLLLAATALY). 3 FtsK domains span residues 456 to 662 (GEPL…SVSR), 811 to 1000 (RDPL…RDSN), and 1090 to 1280 (LAPV…ADSG). ATP contacts are provided by residues 479–486 (GMTGSGKS), 829–836 (GGPKSGKS), and 1107–1114 (GDARSGKT).

Part of the ESX-3 / type VII secretion system (T7SS), which is composed of cytosolic and membrane components. The ESX-3 membrane complex is composed of EccB3, EccC3, EccD3 and EccE3.

It is found in the cell inner membrane. Its function is as follows. Part of the ESX-3 specialized secretion system, which is important for iron and zinc uptake or homeostasis. This is ESX-3 secretion system protein EccC3 from Mycobacterium tuberculosis (strain ATCC 25618 / H37Rv).